A 227-amino-acid chain; its full sequence is Protein FAM3C (227 aa).

Residues 1–24 form the signal peptide; sequence MRVAGAAKLVVAVAVFLLTFYVIS. Intrachain disulfides connect C58/C86 and C64/C221. One can recognise a GG-type lectin domain in the interval 67–225; it reads KHFAFKMASG…VEMEGCIPQK (159 aa).

The protein belongs to the FAM3 family.

Its subcellular location is the secreted. It localises to the cytoplasmic vesicle. In terms of biological role, may be involved in retinal laminar formation. Promotes epithelial to mesenchymal transition. The polypeptide is Protein FAM3C (Fam3c) (Rattus norvegicus (Rat)).